The sequence spans 503 residues: Ribonuclease Y (503 aa).

Residues Gly2–Leu22 traverse the membrane as a helical segment. Residues Thr193–Leu253 form the KH domain. Positions Val319–Ser412 constitute an HD domain.

It belongs to the RNase Y family.

It is found in the cell membrane. Endoribonuclease that initiates mRNA decay. This chain is Ribonuclease Y, found in Mesoplasma florum (strain ATCC 33453 / NBRC 100688 / NCTC 11704 / L1) (Acholeplasma florum).